Consider the following 475-residue polypeptide: MSKKLHIKTWGCQMNEYDSSKMADLLDEYEGYTLTDNAEEADVLLLNTCSIREKAQEKVFHQLGRWKTLKDKKPELIIGVGGCVASQEGKAIKERAQCVDLIFGPQTLHRLPEMIDQIRAGKKAVIDVSFPEIEKFDRLPEPRADGPSAFVSIMEGCSKYCSFCVVPYTRGEEVSRPLDDIILEIAQLAEQGVREVNLLGQNVNAYRGATHDDEICTFAELLRYVAAIDGIDRLRFTTSHPIEFTQDIIDVYEDTPELVSFLHLPVQSGSDLILTQMKRGHMAIEYKSIIRRLRKARPDILISSDFIIGFPGESKQDFADTMKLIEDIQFDHSFSFIYSARPGTPAADLPDDVSLDEKKERLAILQDRITQQAMRYSRQMVGTVQRILVEGPSVKNPMELRGRTENSRVVNFEGMHKHIGKFVDVEIVDVYTNSLRGVFIRGEDEMDLRRDLRPSDITAKYKQTDDLGVSQFKPA.

Residues 3-120 (KKLHIKTWGC…LPEMIDQIRA (118 aa)) form the MTTase N-terminal domain. Residues Cys12, Cys49, Cys83, Cys157, Cys161, and Cys164 each contribute to the [4Fe-4S] cluster site. The region spanning 143–375 (RADGPSAFVS…QDRITQQAMR (233 aa)) is the Radical SAM core domain. One can recognise a TRAM domain in the interval 378–441 (RQMVGTVQRI…TNSLRGVFIR (64 aa)).

It belongs to the methylthiotransferase family. MiaB subfamily. Monomer. Requires [4Fe-4S] cluster as cofactor.

The protein localises to the cytoplasm. It catalyses the reaction N(6)-dimethylallyladenosine(37) in tRNA + (sulfur carrier)-SH + AH2 + 2 S-adenosyl-L-methionine = 2-methylsulfanyl-N(6)-dimethylallyladenosine(37) in tRNA + (sulfur carrier)-H + 5'-deoxyadenosine + L-methionine + A + S-adenosyl-L-homocysteine + 2 H(+). Catalyzes the methylthiolation of N6-(dimethylallyl)adenosine (i(6)A), leading to the formation of 2-methylthio-N6-(dimethylallyl)adenosine (ms(2)i(6)A) at position 37 in tRNAs that read codons beginning with uridine. The polypeptide is tRNA-2-methylthio-N(6)-dimethylallyladenosine synthase (Shewanella halifaxensis (strain HAW-EB4)).